The chain runs to 698 residues: Probable threonine--tRNA ligase 2, cytoplasmic (698 aa).

Positions G38 to E100 constitute a TGS domain. The tract at residues N541–N560 is disordered.

The protein belongs to the class-II aminoacyl-tRNA synthetase family.

Its subcellular location is the cytoplasm. It carries out the reaction tRNA(Thr) + L-threonine + ATP = L-threonyl-tRNA(Thr) + AMP + diphosphate + H(+). The polypeptide is Probable threonine--tRNA ligase 2, cytoplasmic (thrS2) (Dictyostelium discoideum (Social amoeba)).